A 61-amino-acid polypeptide reads, in one-letter code: Photosystem II reaction center X protein (61 aa).

A helical membrane pass occupies residues 26–46; it reads IGSFIAAALLIVIPATAFLIF.

The protein belongs to the PsbX family. Type 2 subfamily. PSII consists of a core antenna complex that captures photons, and an electron transfer chain that converts photonic excitation into a charge separation. PSII forms dimeric complexes.

Its subcellular location is the cellular thylakoid membrane. Its function is as follows. Involved in the binding and/or turnover of quinones at the Q(B) site of Photosystem II. This is Photosystem II reaction center X protein from Prochlorococcus marinus (strain MIT 9312).